The primary structure comprises 654 residues: Integrator complex subunit 9 (654 aa).

The 1D-myo-inositol hexakisphosphate site is built by Met1, Arg2, Thr18, Phe19, Arg504, Lys508, and Arg509.

The protein belongs to the metallo-beta-lactamase superfamily. RNA-metabolizing metallo-beta-lactamase-like family. INTS9 subfamily. As to quaternary structure, belongs to the multiprotein complex Integrator, at least composed of IntS1, IntS2, IntS3, IntS4, omd/IntS5, IntS6, defl/IntS7, IntS8, IntS9, IntS10, IntS11, IntS12, asun/IntS13, IntS14 and IntS15. The core complex associates with protein phosphatase 2A subunits mts/PP2A and Pp2A-29B, to form the Integrator-PP2A (INTAC) complex. Within the complex, interacts with IntS1 and IntS12. IntS9 is part of the RNA endonuclease subcomplex, composed of IntS4, IntS9, IntS11 and inositol hexakisphosphate (InsP6).

The protein localises to the nucleus. Its subcellular location is the cytoplasm. It is found in the cytosol. In terms of biological role, component of the integrator complex, a multiprotein complex that terminates RNA polymerase II (Pol II) transcription in the promoter-proximal region of genes. The integrator complex provides a quality checkpoint during transcription elongation by driving premature transcription termination of transcripts that are unfavorably configured for transcriptional elongation: the complex terminates transcription by (1) catalyzing dephosphorylation of the C-terminal domain (CTD) of Pol II subunit Polr2A/Rbp1 and Spt5, and (2) degrading the exiting nascent RNA transcript via endonuclease activity. The integrator complex is also involved in the 3'-end processing of the U7 snRNA, and also the spliceosomal snRNAs U1, U2, U4 and U5. In Drosophila melanogaster (Fruit fly), this protein is Integrator complex subunit 9.